Consider the following 611-residue polypeptide: MEAITKYGSYFNVRFLSRLCWRLNLSSSYHYPLLKSSLSFSRFQSPKKLCLVRATTNPTDDNSTTRSFTPHPPSLWGHHFLSASVNQTEMDDLWRQIEALKPIVNAMLLPCNGADAKKITCFIHTLVSLGVSYHFEEKIVEFLKDAFENIEDMIIDCKEDDLYTVSIIFRVFRLYGHYITPDIFNRFKGDDGNFKKCLNDDVRGMLSFYEASHFGTTTEDILEEAMSFTQKHLELFLVGEKAKHYPHITKLIQAALYIPQNFNLEILVAREYIDFYELETDHNEMLLKLAKLNFRFLQLQYIQDLKTLTTWWKELDLVSKIPVYFRERLAEPYFWATGIYYEPQYSAARIMLAKSIILVDIVDNTFDVYGTIDEVKSLVQAIERWDSDAVDVLPDYLKVVFRTTFDLFKELEEYVSSEARSFTMQYAYEQLRILMKGYLQEAEWSNRGHLPSHEEYIEVGVASTAGEVLLAMTFIPMGDAAGVGVYEWLRSRPKLTHALFVKSRLRDDIATYKEEMKRGDVCNGINCYTKQHKVSEEEACIEFEKKTNHMSKVMNEEFLKAAKFIPLHILRPVLNYGRLADVCYKYGDGYTFAGEKIKDYITSLYVDLITL.

Residues Asp-363, Asp-367, Asp-507, Thr-511, and Glu-515 each coordinate Mg(2+). Positions 363 to 367 match the DDXXD motif; degenerate motif; it reads DNTFD.

It belongs to the terpene synthase family. Tpsa subfamily. The cofactor is Mg(2+). Requires Mn(2+) as cofactor. In terms of tissue distribution, predominantly expressed in flowers but also in stems, siliques, roots and leaves.

The protein localises to the cytoplasm. The catalysed reaction is (2E,6E,10E)-geranylgeranyl diphosphate + H2O = (3E,7E)-dolabella-3,7-dien-18-ol + diphosphate. Its pathway is secondary metabolite biosynthesis; terpenoid biosynthesis. In terms of biological role, involved in terpene biosynthesis in roots. Possesses sesquiterpene (C15) synthase activity and diterpene (C20) synthase activity in vitro. Possesses dolabella-3,7-dien-18-ol synthase activity in vitro. Catalyzes the formation of dolabella-3,7-dien-18-ol from geranylgeranyl diphosphate. This is Dolabella-3,7-dien-18-ol synthase TPS06 from Arabidopsis thaliana (Mouse-ear cress).